The chain runs to 279 residues: Diaminopimelate epimerase 1 (279 aa).

Substrate-binding residues include Asn-13 and Asn-66. Cys-75 (proton donor) is an active-site residue. Residues 76–77 (GN), Asn-164, Asn-197, and 215–216 (ER) each bind substrate. The Proton acceptor role is filled by Cys-224. 225–226 (GT) provides a ligand contact to substrate.

Belongs to the diaminopimelate epimerase family. As to quaternary structure, homodimer.

The protein localises to the cytoplasm. It catalyses the reaction (2S,6S)-2,6-diaminopimelate = meso-2,6-diaminopimelate. It functions in the pathway amino-acid biosynthesis; L-lysine biosynthesis via DAP pathway; DL-2,6-diaminopimelate from LL-2,6-diaminopimelate: step 1/1. Catalyzes the stereoinversion of LL-2,6-diaminopimelate (L,L-DAP) to meso-diaminopimelate (meso-DAP), a precursor of L-lysine and an essential component of the bacterial peptidoglycan. This is Diaminopimelate epimerase 1 from Nostoc sp. (strain PCC 7120 / SAG 25.82 / UTEX 2576).